Consider the following 380-residue polypeptide: UPF0754 membrane protein Bsph_0374 (380 aa).

A run of 2 helical transmembrane segments spans residues 1 to 21 (MDNF…IGGV) and 357 to 377 (MITV…GLIV).

This sequence belongs to the UPF0754 family.

The protein localises to the cell membrane. This Lysinibacillus sphaericus (strain C3-41) protein is UPF0754 membrane protein Bsph_0374.